The following is a 628-amino-acid chain: DNA primase (628 aa).

The CHC2-type zinc-finger motif lies at 40–64; sequence CPFHEERSPSFSVAEDKQIFHCFGC. The 83-residue stretch at 269–351 folds into the Toprim domain; that stretch reads NTVLLFEGFM…DLSIVSIPEK (83 aa). E275, D319, and D321 together coordinate Mg(2+).

This sequence belongs to the DnaG primase family. As to quaternary structure, monomer. Interacts with DnaB. The cofactor is Zn(2+). Requires Mg(2+) as cofactor.

It catalyses the reaction ssDNA + n NTP = ssDNA/pppN(pN)n-1 hybrid + (n-1) diphosphate.. Functionally, RNA polymerase that catalyzes the synthesis of short RNA molecules used as primers for DNA polymerase during DNA replication. The protein is DNA primase of Enterococcus faecalis (strain ATCC 700802 / V583).